The sequence spans 660 residues: Phosphatidylinositol-3-phosphate phosphatase MTMR7 (660 aa).

The 379-residue stretch at 126 to 504 folds into the Myotubularin phosphatase domain; the sequence is GWVLIDLSEE…FMYKFWSGMY (379 aa). A 1,2-diacyl-sn-glycero-3-phospho-(1D-myo-inositol-3-phosphate) is bound by residues Asn250, Asn275, and Ile276. The active-site Phosphocysteine intermediate is the Cys338. Residues Ser339, Asp340, Gly341, Trp342, Asp343, Arg344, and Arg384 each coordinate a 1,2-diacyl-sn-glycero-3-phospho-(1D-myo-inositol-3-phosphate). The stretch at 514–558 forms a coiled coil; sequence RQSVTDYLMAVKEETQQLEEELEALEERLEKIQKVQLNCTKVKSK. The disordered stretch occupies residues 554-660; that stretch reads KVKSKQSEPS…DSDEAVFLTA (107 aa). Over residues 566-596 the composition is skewed to polar residues; that stretch reads SGFSTSDNSIANTPQDYSGNMKSFPSRSPSQ. Thr578 bears the Phosphothreonine mark. Residues 641-653 show a composition bias toward basic and acidic residues; that stretch reads APSEDSGKDRDSD.

This sequence belongs to the protein-tyrosine phosphatase family. Non-receptor class myotubularin subfamily. In terms of assembly, heterodimer (via C-terminus) with MTMR9 (via coiled coil domain); the interaction enhances MTMR7 catalytic activity. Does not homodimerize. Interacts with RAB1B (in GDP-bound form).

The protein localises to the cytoplasm. It is found in the endomembrane system. The catalysed reaction is a 1,2-diacyl-sn-glycero-3-phospho-(1D-myo-inositol-3-phosphate) + H2O = a 1,2-diacyl-sn-glycero-3-phospho-(1D-myo-inositol) + phosphate. It carries out the reaction 1D-myo-inositol 1,3-bisphosphate + H2O = 1D-myo-inositol 1-phosphate + phosphate. Its activity is regulated as follows. Interaction with MTMR9 increases phosphatase activity. Lipid phosphatase that specifically dephosphorylates the D-3 position of phosphatidylinositol 3-phosphate (PtdIns(3)P) and inositol 1,3-bisphosphate (Ins(1,3)P2). In Pongo abelii (Sumatran orangutan), this protein is Phosphatidylinositol-3-phosphate phosphatase MTMR7.